We begin with the raw amino-acid sequence, 318 residues long: NADH-ubiquinone oxidoreductase chain 1 (318 aa).

The next 8 membrane-spanning stretches (helical) occupy residues 3 to 23 (FVNLLTTIIPILLAVAFLTLL), 68 to 88 (LILFIIAPTLALTLALMMWIP), 102 to 122 (ILFMLALSSLAVYAILWSGWA), 146 to 166 (LAIIILSVLLMNGSFTLSTLI), 171 to 191 (HIWLLLPSWPLAMMWFISTLA), 222 to 242 (LFFLAEYANIIMMNALTTILF), 253 to 273 (EMYTTNFMLKTLLFTTFFLWI), and 294 to 314 (LPLTLVMCMWHITLPIILASI).

The protein belongs to the complex I subunit 1 family.

The protein localises to the mitochondrion inner membrane. The catalysed reaction is a ubiquinone + NADH + 5 H(+)(in) = a ubiquinol + NAD(+) + 4 H(+)(out). In terms of biological role, core subunit of the mitochondrial membrane respiratory chain NADH dehydrogenase (Complex I) that is believed to belong to the minimal assembly required for catalysis. Complex I functions in the transfer of electrons from NADH to the respiratory chain. The immediate electron acceptor for the enzyme is believed to be ubiquinone. This chain is NADH-ubiquinone oxidoreductase chain 1 (MT-ND1), found in Nyctalus plancyi velutinus (Fine-haired noctule).